A 418-amino-acid polypeptide reads, in one-letter code: Cell division protein FtsZ (418 aa).

Residues 27–31 (GGGSN), 114–116 (GTG), Glu-145, Lys-149, and Asp-193 each bind GTP. Positions 386–418 (KNGVKGHTFGVPLPSVNEDLDEPTFLRNRNKGL) are disordered.

It belongs to the FtsZ family. In terms of assembly, homodimer. Polymerizes to form a dynamic ring structure in a strictly GTP-dependent manner. Interacts directly with several other division proteins.

It is found in the cytoplasm. Functionally, essential cell division protein that forms a contractile ring structure (Z ring) at the future cell division site. The regulation of the ring assembly controls the timing and the location of cell division. One of the functions of the FtsZ ring is to recruit other cell division proteins to the septum to produce a new cell wall between the dividing cells. Binds GTP and shows GTPase activity. This is Cell division protein FtsZ from Treponema pallidum (strain Nichols).